A 62-amino-acid polypeptide reads, in one-letter code: Large ribosomal subunit protein bL32 (62 aa).

Over residues 1–19 (MPNPKRRHSKARTGNRRAH) the composition is skewed to basic residues. The tract at residues 1–23 (MPNPKRRHSKARTGNRRAHDHLS) is disordered.

Belongs to the bacterial ribosomal protein bL32 family.

In Koribacter versatilis (strain Ellin345), this protein is Large ribosomal subunit protein bL32.